The sequence spans 611 residues: MASRGARQRLKGSGASSGDTAPAADKLRELLGSREAGGAEHRTELSGNKAGQVWAPEGSTAFKCLLSARLCAALLSNISDCDETFNYWEPTHYLIYGEGFQTWEYSPAYAIRSYAYLLLHAWPAAFHARILQTNKILVFYFLRCLLAFVSCICELYFYKAVCKKFGLHVSRMMLAFLVLSTGMFCSSSAFLPSSFCMYTTLIAMTGWYMDKTSIAVLGVAAGAILGWPFSAALGLPIAFDLLVMKHRWKSFFHWSLMALILFLVPVVVIDSYYYGKLVIAPLNIVLYNVFTPHGPDLYGTEPWYFYLINGFLNFNVAFALALLVLPLTSLMEYLLQRFHVQNLGHPYWLTLAPMYIWFIIFFIQPHKEERFLFPVYPLICLCGAVALSALQKCYHFVFQRYRLEHYTVTSNWLALGTVFLFGLLSFSRSVALFRGYHGPLDLYPEFYRIATDPTIHTVPEGRPVNVCVGKEWYRFPSSFLLPDNWQLQFIPSEFRGQLPKPFAEGPLATRIVPTDMNDQNLEEPSRYIDISKCHYLVDLDTMRETPREPKYSSNKEEWISLAYRPFLDASRSSKLLRAFYVPFLSDQYTVYVNYTILKPRKAKQIRKKSGG.

The segment covering 1–10 (MASRGARQRL) has biased composition (basic residues). The tract at residues 1 to 23 (MASRGARQRLKGSGASSGDTAPA) is disordered. Topologically, residues 1-135 (MASRGARQRL…FHARILQTNK (135 aa)) are lumenal. Asn77 carries an N-linked (GlcNAc...) asparagine glycan. The chain crosses the membrane as a helical span at residues 136-156 (ILVFYFLRCLLAFVSCICELY). Residues 157–171 (FYKAVCKKFGLHVSR) lie on the Cytoplasmic side of the membrane. A helical membrane pass occupies residues 172–192 (MMLAFLVLSTGMFCSSSAFLP). At 193–213 (SSFCMYTTLIAMTGWYMDKTS) the chain is on the lumenal side. Residues 214 to 234 (IAVLGVAAGAILGWPFSAALG) form a helical membrane-spanning segment. Residues 235–249 (LPIAFDLLVMKHRWK) lie on the Cytoplasmic side of the membrane. Residues 250–270 (SFFHWSLMALILFLVPVVVID) form a helical membrane-spanning segment. Residues 271–304 (SYYYGKLVIAPLNIVLYNVFTPHGPDLYGTEPWY) lie on the Lumenal side of the membrane. Residues 305 to 325 (FYLINGFLNFNVAFALALLVL) traverse the membrane as a helical segment. Over 326-342 (PLTSLMEYLLQRFHVQN) the chain is Cytoplasmic. Residues 343–363 (LGHPYWLTLAPMYIWFIIFFI) form a helical membrane-spanning segment. Residues 364-370 (QPHKEER) are Lumenal-facing. The helical transmembrane segment at 371–391 (FLFPVYPLICLCGAVALSALQ) threads the bilayer. Residues 392–405 (KCYHFVFQRYRLEH) are Cytoplasmic-facing. A helical transmembrane segment spans residues 406–426 (YTVTSNWLALGTVFLFGLLSF). Residues 427-611 (SRSVALFRGY…AKQIRKKSGG (185 aa)) are Lumenal-facing. Residue Asn593 is glycosylated (N-linked (GlcNAc...) asparagine).

The protein belongs to the glycosyltransferase 22 family. As to expression, ubiquitously expressed; with highest levels in heart, liver and pancreas.

The protein resides in the endoplasmic reticulum membrane. It carries out the reaction an alpha-D-Man-(1-&gt;2)-alpha-D-Man-(1-&gt;2)-alpha-D-Man-(1-&gt;3)-[alpha-D-Man-(1-&gt;3)-alpha-D-Man-(1-&gt;6)]-beta-D-Man-(1-&gt;4)-beta-D-GlcNAc-(1-&gt;4)-alpha-D-GlcNAc-diphospho-di-trans,poly-cis-dolichol + a di-trans,poly-cis-dolichyl beta-D-mannosyl phosphate = an alpha-D-Man-(1-&gt;2)-alpha-D-Man-(1-&gt;2)-alpha-D-Man-(1-&gt;3)-[alpha-D-Man-(1-&gt;2)-alpha-D-Man-(1-&gt;3)-alpha-D-Man-(1-&gt;6)]-beta-D-Man-(1-&gt;4)-beta-D-GlcNAc-(1-&gt;4)-alpha-D-GlcNAc-diphospho-di-trans,poly-cis-dolichol + a di-trans,poly-cis-dolichyl phosphate + H(+). It catalyses the reaction an alpha-D-Man-(1-&gt;2)-alpha-D-Man-(1-&gt;2)-alpha-D-Man-(1-&gt;3)-[alpha-D-Man-(1-&gt;2)-alpha-D-Man-(1-&gt;3)-[alpha-D-Man-(1-&gt;6)]-alpha-D-Man-(1-&gt;6)]-beta-D-Man-(1-&gt;4)-beta-D-GlcNAc-(1-&gt;4)-alpha-D-GlcNAc-diphospho-di-trans,poly-cis-dolichol + a di-trans,poly-cis-dolichyl beta-D-mannosyl phosphate = an alpha-D-Man-(1-&gt;2)-alpha-D-Man-(1-&gt;2)-alpha-D-Man-(1-&gt;3)-[alpha-D-Man-(1-&gt;2)-alpha-D-Man-(1-&gt;3)-[alpha-D-Man-(1-&gt;2)-alpha-D-Man-(1-&gt;6)]-alpha-D-Man-(1-&gt;6)]-beta-D-Man-(1-&gt;4)-beta-D-GlcNAc-(1-&gt;4)-alpha-D-GlcNAc-diphospho-di-trans,poly-cis-dolichol + a di-trans,poly-cis-dolichyl phosphate + H(+). It participates in protein modification; protein glycosylation. Functionally, mannosyltransferase that operates in the biosynthetic pathway of dolichol-linked oligosaccharides, the glycan precursors employed in protein asparagine (N)-glycosylation. The assembly of dolichol-linked oligosaccharides begins on the cytosolic side of the endoplasmic reticulum membrane and finishes in its lumen. The sequential addition of sugars to dolichol pyrophosphate produces dolichol-linked oligosaccharides containing fourteen sugars, including two GlcNAcs, nine mannoses and three glucoses. Once assembled, the oligosaccharide is transferred from the lipid to nascent proteins by oligosaccharyltransferases. In the lumen of the endoplasmic reticulum, catalyzes the addition of the seventh and ninth alpha-1,2-linked mannose residues to Man(6)GlcNAc(2)-PP-dolichol and Man(8)GlcNAc(2)-PP-dolichol respectively. The sequence is that of Alpha-1,2-mannosyltransferase ALG9 from Homo sapiens (Human).